Reading from the N-terminus, the 663-residue chain is UvrABC system protein B (663 aa).

Over residues 1–10 (MIDKRDDKPF) the composition is skewed to basic and acidic residues. A disordered region spans residues 1–23 (MIDKRDDKPFKLKSKYKPSGDQP). A Helicase ATP-binding domain is found at 31–271 (DNIEGGEKAQ…EQSIAKIQAE (241 aa)). 44–51 (GATGTGKT) lines the ATP pocket. The short motif at 97–120 (YYDYYQPEAYVPSSDTYIEKDSSV) is the Beta-hairpin element. Residues 435 to 601 (QMDDLLGEIN…TIKKDIRGLI (167 aa)) enclose the Helicase C-terminal domain. A UVR domain is found at 627–662 (KEAINALQKQMQEAAELLDFELAAQMRDLILELKLM).

This sequence belongs to the UvrB family. As to quaternary structure, forms a heterotetramer with UvrA during the search for lesions. Interacts with UvrC in an incision complex.

The protein localises to the cytoplasm. Functionally, the UvrABC repair system catalyzes the recognition and processing of DNA lesions. A damage recognition complex composed of 2 UvrA and 2 UvrB subunits scans DNA for abnormalities. Upon binding of the UvrA(2)B(2) complex to a putative damaged site, the DNA wraps around one UvrB monomer. DNA wrap is dependent on ATP binding by UvrB and probably causes local melting of the DNA helix, facilitating insertion of UvrB beta-hairpin between the DNA strands. Then UvrB probes one DNA strand for the presence of a lesion. If a lesion is found the UvrA subunits dissociate and the UvrB-DNA preincision complex is formed. This complex is subsequently bound by UvrC and the second UvrB is released. If no lesion is found, the DNA wraps around the other UvrB subunit that will check the other stand for damage. The polypeptide is UvrABC system protein B (Streptococcus pyogenes serotype M2 (strain MGAS10270)).